The chain runs to 519 residues: Glucose-1-phosphate adenylyltransferase large subunit 3, chloroplastic/amyloplastic (519 aa).

The transit peptide at 1–74 (MQFSSVFPLE…DAGPDTLHVR (74 aa)) directs the protein to the chloroplast.

The protein belongs to the bacterial/plant glucose-1-phosphate adenylyltransferase family. In terms of assembly, heterotetramer composed of two small and two large subunits. As to expression, expressed in stems.

The protein localises to the plastid. The protein resides in the chloroplast. It catalyses the reaction alpha-D-glucose 1-phosphate + ATP + H(+) = ADP-alpha-D-glucose + diphosphate. It functions in the pathway glycan biosynthesis; starch biosynthesis. With respect to regulation, activated by 3'phosphoglycerate, inhibited by orthophosphate. Allosteric regulation. Its function is as follows. Involved in synthesis of starch. Catalyzes the synthesis of ADP-glucose, a molecule that serves as an activated glycosyl donor for alpha-1,4-glucan synthesis. Essential for starch synthesis in leaf chloroplasts. The protein is Glucose-1-phosphate adenylyltransferase large subunit 3, chloroplastic/amyloplastic of Oryza sativa subsp. japonica (Rice).